The following is a 165-amino-acid chain: Putative pre-16S rRNA nuclease (165 aa).

The protein belongs to the YqgF nuclease family.

The protein localises to the cytoplasm. Functionally, could be a nuclease involved in processing of the 5'-end of pre-16S rRNA. This chain is Putative pre-16S rRNA nuclease, found in Brucella anthropi (strain ATCC 49188 / DSM 6882 / CCUG 24695 / JCM 21032 / LMG 3331 / NBRC 15819 / NCTC 12168 / Alc 37) (Ochrobactrum anthropi).